We begin with the raw amino-acid sequence, 338 residues long: Ketol-acid reductoisomerase (NADP(+)) (338 aa).

Residues 1–181 (MKVFYDKDCD…GGGKGGIIET (181 aa)) enclose the KARI N-terminal Rossmann domain. NADP(+) contacts are provided by residues 24–27 (YGSQ), R47, and S52. Residue H107 is part of the active site. G133 is an NADP(+) binding site. One can recognise a KARI C-terminal knotted domain in the interval 182 to 327 (NFKEETETDL…GQLRAMMPWI (146 aa)). 4 residues coordinate Mg(2+): D190, E194, E226, and E230. A substrate-binding site is contributed by S251.

It belongs to the ketol-acid reductoisomerase family. Mg(2+) serves as cofactor.

The enzyme catalyses (2R)-2,3-dihydroxy-3-methylbutanoate + NADP(+) = (2S)-2-acetolactate + NADPH + H(+). It catalyses the reaction (2R,3R)-2,3-dihydroxy-3-methylpentanoate + NADP(+) = (S)-2-ethyl-2-hydroxy-3-oxobutanoate + NADPH + H(+). Its pathway is amino-acid biosynthesis; L-isoleucine biosynthesis; L-isoleucine from 2-oxobutanoate: step 2/4. It functions in the pathway amino-acid biosynthesis; L-valine biosynthesis; L-valine from pyruvate: step 2/4. Functionally, involved in the biosynthesis of branched-chain amino acids (BCAA). Catalyzes an alkyl-migration followed by a ketol-acid reduction of (S)-2-acetolactate (S2AL) to yield (R)-2,3-dihydroxy-isovalerate. In the isomerase reaction, S2AL is rearranged via a Mg-dependent methyl migration to produce 3-hydroxy-3-methyl-2-ketobutyrate (HMKB). In the reductase reaction, this 2-ketoacid undergoes a metal-dependent reduction by NADPH to yield (R)-2,3-dihydroxy-isovalerate. The sequence is that of Ketol-acid reductoisomerase (NADP(+)) from Delftia acidovorans (strain DSM 14801 / SPH-1).